The sequence spans 89 residues: Large ribosomal subunit protein bL27 (89 aa).

The protein belongs to the bacterial ribosomal protein bL27 family.

In Synechococcus sp. (strain JA-3-3Ab) (Cyanobacteria bacterium Yellowstone A-Prime), this protein is Large ribosomal subunit protein bL27.